We begin with the raw amino-acid sequence, 150 residues long: Leukotriene C4 synthase (150 aa).

Over 1–6 (MKDEVA) the chain is Cytoplasmic. The chain crosses the membrane as a helical span at residues 7–27 (LLATVTLLGVLLQAYFSLQVI). Over 28 to 48 (RARRAHRVSPPLTTGPPEFER) the chain is Lumenal. Residue Arg-30 participates in glutathione binding. The active-site Proton donor is the Arg-31. Ser-36 carries the post-translational modification Phosphoserine. A helical transmembrane segment spans residues 49-69 (VYRAQVNCSEYFPLFLATLWV). Residues 51–55 (RAQVN) and 58–59 (EY) contribute to the glutathione site. At 70–73 (AGVY) the chain is on the cytoplasmic side. Residues 74–94 (FHEGAAALCGLVYLFTRLRYF) form a helical membrane-spanning segment. A glutathione-binding site is contributed by 93–97 (YFWGY). Residues 95 to 104 (WGYARSAQLR) lie on the Lumenal side of the membrane. The Proton acceptor role is filled by Arg-104. A helical transmembrane segment spans residues 105 to 124 (LAPLYASARALWLLLALATL). Residues 125-150 (GLLAHFLPAAARAALLRLLRALLRTA) are Cytoplasmic-facing.

It belongs to the MAPEG family. Homotrimer. Interacts with ALOX5AP and ALOX5. In terms of processing, phosphorylation at Ser-36 by RPS6KB1 inhibits the leukotriene-C4 synthase activity.

The protein resides in the nucleus outer membrane. It localises to the endoplasmic reticulum membrane. It is found in the nucleus membrane. It carries out the reaction leukotriene C4 = leukotriene A4 + glutathione. The enzyme catalyses (13S,14S)-epoxy-(4Z,7Z,9E,11E,16Z,19Z)-docosahexaenoate + glutathione = (13R)-S-glutathionyl-(14S)-hydroxy-(4Z,7Z,9E,11E,16Z,19Z)-docosahexaenoate. The protein operates within lipid metabolism; leukotriene C4 biosynthesis. Its activity is regulated as follows. Inhibited by MK886. Its function is as follows. Catalyzes the conjugation of leukotriene A4 with reduced glutathione (GSH) to form leukotriene C4 with high specificity. Can also catalyze the transfer of a glutathionyl group from glutathione (GSH) to 13(S),14(S)-epoxy-docosahexaenoic acid to form maresin conjugate in tissue regeneration 1 (MCTR1), a bioactive lipid mediator that possess potent anti-inflammatory and proresolving actions. The polypeptide is Leukotriene C4 synthase (LTC4S) (Cavia porcellus (Guinea pig)).